The primary structure comprises 427 residues: Phosphoglucosamine mutase (427 aa).

The active-site Phosphoserine intermediate is the S94. 4 residues coordinate Mg(2+): S94, D228, D230, and D232. Phosphoserine is present on S94.

This sequence belongs to the phosphohexose mutase family. Mg(2+) serves as cofactor. Activated by phosphorylation.

The enzyme catalyses alpha-D-glucosamine 1-phosphate = D-glucosamine 6-phosphate. Catalyzes the conversion of glucosamine-6-phosphate to glucosamine-1-phosphate. This is Phosphoglucosamine mutase from Thermotoga sp. (strain RQ2).